The sequence spans 700 residues: non-specific serine/threonine protein kinase Cdc7 (700 aa).

The Protein kinase domain maps to 127 to 644; it reads FDVHSRIGNG…AEEALKHPFF (518 aa). ATP contacts are provided by residues 133–141 and lysine 163; that span reads IGNGTFSTV. Aspartate 250 functions as the Proton acceptor in the catalytic mechanism.

Belongs to the protein kinase superfamily. Ser/Thr protein kinase family. Component of the Dbf4-dependent kinase (DDK) complex consisting of Cdc7 and the Dbf4 ortholog chif. Interacts with chif (via the processed polypeptide Chiffon-A); the interaction is direct.

The enzyme catalyses L-seryl-[protein] + ATP = O-phospho-L-seryl-[protein] + ADP + H(+). The catalysed reaction is L-threonyl-[protein] + ATP = O-phospho-L-threonyl-[protein] + ADP + H(+). Activated by chif. Inhibited by the synthetic compound XL413. Functionally, catalytic component of the Dbf4-dependent kinase (DDK) complex. Phosphorylates components of the pre-replication complex, including Mcm2 and, to a lesser extent, Mcm4. Phosphorylates histones, including H3 and H2B. Required for DNA replication and mitotic proliferation, including during the endoreplication and amplification stages of DNA replication in egg chamber follicle cells of the ovary. The sequence is that of non-specific serine/threonine protein kinase Cdc7 from Drosophila melanogaster (Fruit fly).